A 976-amino-acid polypeptide reads, in one-letter code: Leucine--tRNA ligase (976 aa).

The short motif at 63–74 is the 'HIGH' region element; sequence PYPSGVGLHVGH. Residues 745–749 carry the 'KMSKS' region motif; it reads KMGKS. ATP is bound at residue K748.

This sequence belongs to the class-I aminoacyl-tRNA synthetase family.

The protein resides in the cytoplasm. The enzyme catalyses tRNA(Leu) + L-leucine + ATP = L-leucyl-tRNA(Leu) + AMP + diphosphate. The chain is Leucine--tRNA ligase from Corynebacterium jeikeium (strain K411).